Consider the following 185-residue polypeptide: Ribosome-recycling factor (185 aa).

It belongs to the RRF family.

The protein resides in the cytoplasm. Its function is as follows. Responsible for the release of ribosomes from messenger RNA at the termination of protein biosynthesis. May increase the efficiency of translation by recycling ribosomes from one round of translation to another. The protein is Ribosome-recycling factor of Campylobacter fetus subsp. fetus (strain 82-40).